Reading from the N-terminus, the 184-residue chain is Peptide deformylase (184 aa).

Fe cation-binding residues include cysteine 98 and histidine 140. The active site involves glutamate 141. Histidine 144 provides a ligand contact to Fe cation.

This sequence belongs to the polypeptide deformylase family. Fe(2+) is required as a cofactor.

The catalysed reaction is N-terminal N-formyl-L-methionyl-[peptide] + H2O = N-terminal L-methionyl-[peptide] + formate. Functionally, removes the formyl group from the N-terminal Met of newly synthesized proteins. Requires at least a dipeptide for an efficient rate of reaction. N-terminal L-methionine is a prerequisite for activity but the enzyme has broad specificity at other positions. This Phocaeicola vulgatus (strain ATCC 8482 / DSM 1447 / JCM 5826 / CCUG 4940 / NBRC 14291 / NCTC 11154) (Bacteroides vulgatus) protein is Peptide deformylase.